The primary structure comprises 189 residues: uncharacterized protein (189 aa).

One can recognise an HTH tetR-type domain in the interval Ala9 to Val69. Residues Thr32 to Trp51 constitute a DNA-binding region (H-T-H motif).

This is an uncharacterized protein from Mycobacterium tuberculosis (strain CDC 1551 / Oshkosh).